Here is a 232-residue protein sequence, read N- to C-terminus: Imidazoleglycerol-phosphate dehydratase (232 aa).

Belongs to the imidazoleglycerol-phosphate dehydratase family.

The enzyme catalyses D-erythro-1-(imidazol-4-yl)glycerol 3-phosphate = 3-(imidazol-4-yl)-2-oxopropyl phosphate + H2O. It functions in the pathway amino-acid biosynthesis; L-histidine biosynthesis; L-histidine from 5-phospho-alpha-D-ribose 1-diphosphate: step 6/9. The protein is Imidazoleglycerol-phosphate dehydratase (HIS3) of Lachancea kluyveri (strain ATCC 58438 / CBS 3082 / BCRC 21498 / NBRC 1685 / JCM 7257 / NCYC 543 / NRRL Y-12651) (Yeast).